The sequence spans 1012 residues: Alanine--tRNA ligase, mitochondrial (1012 aa).

A mitochondrion-targeting transit peptide spans 1-24 (MYNSAKQLQRVLTAREIRKTFLDH). Zn(2+) contacts are provided by histidine 656, histidine 660, cysteine 766, and histidine 770.

This sequence belongs to the class-II aminoacyl-tRNA synthetase family. Monomer. Zn(2+) serves as cofactor.

It localises to the mitochondrion. It carries out the reaction tRNA(Ala) + L-alanine + ATP = L-alanyl-tRNA(Ala) + AMP + diphosphate. Functionally, catalyzes the attachment of alanine to tRNA(Ala) in a two-step reaction: alanine is first activated by ATP to form Ala-AMP and then transferred to the acceptor end of tRNA(Ala). Also edits incorrectly charged tRNA(Ala) via its editing domain. The sequence is that of Alanine--tRNA ligase, mitochondrial from Drosophila melanogaster (Fruit fly).